Reading from the N-terminus, the 237-residue chain is Riboflavin kinase (237 aa).

The segment at 1 to 101 (MRLKIKAIWV…SRIFSSEPDV (101 aa)) is unknown. The tract at residues 102-237 (LELEGNVLKG…VKKQGMEGQK (136 aa)) is riboflavin kinase. Position 111-116 (111-116 (GLGEGQ)) interacts with CDP. The Mg(2+) site is built by Thr-140 and Asn-142. Positions 197 and 205 each coordinate FMN. 210–213 (VKLR) contacts CDP.

Belongs to the archaeal riboflavin kinase family. Requires Mg(2+) as cofactor.

The catalysed reaction is riboflavin + CTP = CDP + FMN + H(+). The protein operates within cofactor biosynthesis; FMN biosynthesis; FMN from riboflavin (CTP route): step 1/1. Its function is as follows. Catalyzes the CTP-dependent phosphorylation of riboflavin (vitamin B2) to form flavin mononucleotide (FMN). This chain is Riboflavin kinase (ribK), found in Methanosarcina acetivorans (strain ATCC 35395 / DSM 2834 / JCM 12185 / C2A).